Here is a 178-residue protein sequence, read N- to C-terminus: Ribosomal RNA small subunit methyltransferase G (178 aa).

Residues glycine 54, leucine 59, 105–106 (LE), and arginine 120 contribute to the S-adenosyl-L-methionine site.

This sequence belongs to the methyltransferase superfamily. RNA methyltransferase RsmG family.

Its subcellular location is the cytoplasm. The catalysed reaction is guanosine(527) in 16S rRNA + S-adenosyl-L-methionine = N(7)-methylguanosine(527) in 16S rRNA + S-adenosyl-L-homocysteine. Specifically methylates the N7 position of guanine in position 527 of 16S rRNA. This chain is Ribosomal RNA small subunit methyltransferase G, found in Helicobacter pylori (strain ATCC 700392 / 26695) (Campylobacter pylori).